A 204-amino-acid chain; its full sequence is Quinol oxidase subunit 3 (204 aa).

The next 5 helical transmembrane spans lie at 27-47 (FWIF…TFFV), 66-86 (LVMI…IAVH), 95-115 (GVVI…GCEI), 140-160 (LLGT…GILI), and 184-204 (FLDV…LGGL).

The protein belongs to the cytochrome c oxidase subunit 3 family.

It localises to the cell membrane. It catalyses the reaction 2 a quinol + O2 = 2 a quinone + 2 H2O. Its function is as follows. Catalyzes quinol oxidation with the concomitant reduction of oxygen to water. Major component for energy conversion during vegetative growth. The sequence is that of Quinol oxidase subunit 3 (qoxC) from Bacillus spizizenii (strain ATCC 23059 / NRRL B-14472 / W23) (Bacillus subtilis subsp. spizizenii).